The sequence spans 337 residues: Inositol 2-dehydrogenase (337 aa).

Belongs to the Gfo/Idh/MocA family. As to quaternary structure, homotetramer.

It carries out the reaction myo-inositol + NAD(+) = scyllo-inosose + NADH + H(+). Its function is as follows. Involved in the oxidation of myo-inositol (MI) to 2-keto-myo-inositol (2KMI or 2-inosose). The protein is Inositol 2-dehydrogenase of Burkholderia multivorans (strain ATCC 17616 / 249).